A 342-amino-acid polypeptide reads, in one-letter code: Elongation factor Ts (342 aa).

The segment at 80-83 (TDFV) is involved in Mg(2+) ion dislocation from EF-Tu.

This sequence belongs to the EF-Ts family.

The protein resides in the cytoplasm. Its function is as follows. Associates with the EF-Tu.GDP complex and induces the exchange of GDP to GTP. It remains bound to the aminoacyl-tRNA.EF-Tu.GTP complex up to the GTP hydrolysis stage on the ribosome. The chain is Elongation factor Ts from Lactobacillus delbrueckii subsp. bulgaricus (strain ATCC 11842 / DSM 20081 / BCRC 10696 / JCM 1002 / NBRC 13953 / NCIMB 11778 / NCTC 12712 / WDCM 00102 / Lb 14).